Reading from the N-terminus, the 676-residue chain is LIM domain-containing protein 1 (676 aa).

The segment at 54 to 134 is mediates nuclear export; sequence KIHLQQQQQQ…PPYPPQEQRS (81 aa). Disordered regions lie at residues 104–163 and 189–389; these read KPPL…SAFH and KWGD…TSLV. Ser145 carries the post-translational modification Phosphoserine. The segment at 186 to 260 is interaction with EGLN1/PHD2; that stretch reads ASPKWGDKPG…IGGRSSEKPT (75 aa). 2 stretches are compositionally biased toward low complexity: residues 201–213 and 232–242; these read GLSVGSGWPSSPG and LSLSSSRSSEG. A phosphoserine mark is found at Ser233 and Ser239. A compositionally biased stretch (gly residues) spans 243–253; the sequence is SLGGQNSGIGG. Positions 262 to 271 are enriched in polar residues; the sequence is LWSTASSQRV. Phosphoserine is present on residues Ser272, Ser277, Ser304, and Ser316. Low complexity predominate over residues 343–360; the sequence is SYLSSSAPSSSPAGLDGS. Residues 404–442 are interaction with RB1; the sequence is GPLGWSSDGSLGSVLLDSPSSPRVRLPCQPLVPGPELRP. 2 positions are modified to phosphoserine: Ser421 and Ser424. LIM zinc-binding domains lie at 470-531, 535-595, and 595-664; these read GACV…SGFQ, DRCF…VLAP, and PKCA…RLEK. A necessary for nuclear localization region spans residues 472–676; sequence CVKCSKGVFG…SSTALHQHHF (205 aa).

This sequence belongs to the zyxin/ajuba family. As to quaternary structure, interacts (via LIM domains) with TRAF6. Found in a complex with TRAF6, PRKCZ and SQSTM1. Interacts (via LIM domains) SNAI2/SLUG (via SNAG domain) and SCRT1 (via SNAG domain). Interacts with SQSTM1 and RB1. Found in a complex composed of LIMD1, VHL, EGLN1/PHD2, ELOB and CUL2. Interacts with EIF4E, AGO1, AGO2, DCP2, DDX6, LATS1, LATS2, EGLN1/PHD2, EGLN2/PHD1 and EGLN3/PHD3. Interacts (via LIM zinc-binding 2) with isoform 1 and isoform 3 of VHL. Interacts (via LIM domains) with SNAI1 (via SNAG domain). Post-translationally, phosphorylated during mitosis. Expressed in normal and breast cancer tissues (at protein level). Ubiquitous.

It localises to the cytoplasm. It is found in the nucleus. The protein localises to the P-body. The protein resides in the cell junction. Its subcellular location is the adherens junction. It localises to the focal adhesion. Adapter or scaffold protein which participates in the assembly of numerous protein complexes and is involved in several cellular processes such as cell fate determination, cytoskeletal organization, repression of gene transcription, cell-cell adhesion, cell differentiation, proliferation and migration. Positively regulates microRNA (miRNA)-mediated gene silencing and is essential for P-body formation and integrity. Acts as a hypoxic regulator by bridging an association between the prolyl hydroxylases and VHL enabling efficient degradation of HIF1A. Acts as a transcriptional corepressor for SNAI1- and SNAI2/SLUG-dependent repression of E-cadherin transcription. Negatively regulates the Hippo signaling pathway and antagonizes phosphorylation of YAP1. Inhibits E2F-mediated transcription, and suppresses the expression of the majority of genes with E2F1-responsive elements. Regulates osteoblast development, function, differentiation and stress osteoclastogenesis. Enhances the ability of TRAF6 to activate adapter protein complex 1 (AP-1) and negatively regulates the canonical Wnt receptor signaling pathway in osteoblasts. May act as a tumor suppressor by inhibiting cell proliferation. The protein is LIM domain-containing protein 1 (LIMD1) of Homo sapiens (Human).